The chain runs to 465 residues: Ribulose bisphosphate carboxylase large chain (465 aa).

Position 4 is an N6,N6,N6-trimethyllysine (Lys4). Asn113 and Thr163 together coordinate substrate. Lys165 serves as the catalytic Proton acceptor. Residue Lys167 participates in substrate binding. Residues Lys191, Asp193, and Glu194 each coordinate Mg(2+). Lys191 carries the N6-carboxylysine modification. Catalysis depends on His284, which acts as the Proton acceptor. 3 residues coordinate substrate: Arg285, His317, and Ser369.

It belongs to the RuBisCO large chain family. Type I subfamily. As to quaternary structure, heterohexadecamer of 8 large chains and 8 small chains; disulfide-linked. The disulfide link is formed within the large subunit homodimers. It depends on Mg(2+) as a cofactor. In terms of processing, the disulfide bond which can form in the large chain dimeric partners within the hexadecamer appears to be associated with oxidative stress and protein turnover.

The protein localises to the plastid. The protein resides in the chloroplast. It catalyses the reaction 2 (2R)-3-phosphoglycerate + 2 H(+) = D-ribulose 1,5-bisphosphate + CO2 + H2O. The enzyme catalyses D-ribulose 1,5-bisphosphate + O2 = 2-phosphoglycolate + (2R)-3-phosphoglycerate + 2 H(+). RuBisCO catalyzes two reactions: the carboxylation of D-ribulose 1,5-bisphosphate, the primary event in carbon dioxide fixation, as well as the oxidative fragmentation of the pentose substrate in the photorespiration process. Both reactions occur simultaneously and in competition at the same active site. The polypeptide is Ribulose bisphosphate carboxylase large chain (Clitoria ternatea (Butterfly pea)).